The chain runs to 156 residues: Sperm acrosome-associated protein 5 (156 aa).

The signal sequence occupies residues 1-18 (MQVSGTIVVILMAANVEA). One can recognise a C-type lysozyme domain in the interval 19-147 (KIYERCDLAK…SEWLRGCHMN (129 aa)). Intrachain disulfides connect C24–C144, C48–C132, C82–C97, and C93–C111. E53 is a catalytic residue.

Belongs to the glycosyl hydrolase 22 family.

Its subcellular location is the secreted. The catalysed reaction is Hydrolysis of (1-&gt;4)-beta-linkages between N-acetylmuramic acid and N-acetyl-D-glucosamine residues in a peptidoglycan and between N-acetyl-D-glucosamine residues in chitodextrins.. In Bos taurus (Bovine), this protein is Sperm acrosome-associated protein 5 (SPACA5).